The following is a 361-amino-acid chain: Alanine racemase (361 aa).

Lys-34 (proton acceptor; specific for D-alanine) is an active-site residue. Lys-34 carries the N6-(pyridoxal phosphate)lysine modification. Arg-129 contacts substrate. Catalysis depends on Tyr-256, which acts as the Proton acceptor; specific for L-alanine. Met-304 serves as a coordination point for substrate.

The protein belongs to the alanine racemase family. In terms of assembly, homodimer. Pyridoxal 5'-phosphate serves as cofactor.

It carries out the reaction L-alanine = D-alanine. Its pathway is amino-acid biosynthesis; D-alanine biosynthesis; D-alanine from L-alanine: step 1/1. Functionally, catalyzes the interconversion of L-alanine and D-alanine. May also act on other amino acids. In Corynebacterium glutamicum (strain ATCC 13032 / DSM 20300 / JCM 1318 / BCRC 11384 / CCUG 27702 / LMG 3730 / NBRC 12168 / NCIMB 10025 / NRRL B-2784 / 534), this protein is Alanine racemase (alr).